The sequence spans 845 residues: Protein translocase subunit SecA (845 aa).

Residues Gln-85, 103–107, and Asp-492 contribute to the ATP site; that span reads GEGKT. Residues 787–845 are disordered; the sequence is REQVAQGQAEHPETEQDAAAQSNTSAKRQPVRVDKKVGRNDLCPCGSGKKFKNCHGRNA. Positions 829, 831, 840, and 841 each coordinate Zn(2+). Over residues 835–845 the composition is skewed to basic residues; it reads KKFKNCHGRNA.

This sequence belongs to the SecA family. Monomer and homodimer. Part of the essential Sec protein translocation apparatus which comprises SecA, SecYEG and auxiliary proteins SecDF. Other proteins may also be involved. The cofactor is Zn(2+).

It is found in the cell membrane. Its subcellular location is the cytoplasm. It carries out the reaction ATP + H2O + cellular proteinSide 1 = ADP + phosphate + cellular proteinSide 2.. Functionally, part of the Sec protein translocase complex. Interacts with the SecYEG preprotein conducting channel. Has a central role in coupling the hydrolysis of ATP to the transfer of proteins into and across the cell membrane, serving as an ATP-driven molecular motor driving the stepwise translocation of polypeptide chains across the membrane. This Enterococcus faecalis (strain ATCC 700802 / V583) protein is Protein translocase subunit SecA.